Here is a 682-residue protein sequence, read N- to C-terminus: Potassium-transporting ATPase ATP-binding subunit (682 aa).

4 helical membrane-spanning segments follow: residues 34-54 (PVMFIVWIGSLLTTCISIAMA), 62-82 (ALFSAAISGWLWITVLFANFA), 219-239 (IALTILLIALTIVFLLATATL), and 254-274 (VLVALLVCLIPTTIGGLLSAI). Asp-307 serves as the catalytic 4-aspartylphosphate intermediate. Residues Asp-344, Glu-348, 377–384 (FTAQSRMS), and Lys-395 contribute to the ATP site. Residues Asp-518 and Asp-522 each coordinate Mg(2+). 3 helical membrane-spanning segments follow: residues 588-608 (FAIIPAAFAATYPQLNALNIM), 616-636 (AILSAVIFNALIIVFLIPLAL), and 656-676 (IYGLGGLLVPFIGIKVIDLLL).

The protein belongs to the cation transport ATPase (P-type) (TC 3.A.3) family. Type IA subfamily. In terms of assembly, the system is composed of three essential subunits: KdpA, KdpB and KdpC.

It localises to the cell inner membrane. The catalysed reaction is K(+)(out) + ATP + H2O = K(+)(in) + ADP + phosphate + H(+). Its function is as follows. Part of the high-affinity ATP-driven potassium transport (or Kdp) system, which catalyzes the hydrolysis of ATP coupled with the electrogenic transport of potassium into the cytoplasm. This subunit is responsible for energy coupling to the transport system and for the release of the potassium ions to the cytoplasm. The polypeptide is Potassium-transporting ATPase ATP-binding subunit (Escherichia coli O9:H4 (strain HS)).